The sequence spans 190 residues: Small ribosomal subunit protein mS23 (190 aa).

Position 2 is an N-acetylalanine (Ala-2). At Lys-102 the chain carries N6-acetyllysine. Residues 139-190 are disordered; it reads RTQHGGSHVSRKSEHLSVRPQTALEENETQKEVPQDQHLEAPADQSKGLLPP. Over residues 166–179 the composition is skewed to basic and acidic residues; it reads ETQKEVPQDQHLEA.

The protein belongs to the mitochondrion-specific ribosomal protein mS23 family. As to quaternary structure, component of the mitochondrial small ribosomal subunit (mt-SSU). Mature mammalian 55S mitochondrial ribosomes consist of a small (28S) and a large (39S) subunit. The 28S small subunit contains a 12S ribosomal RNA (12S mt-rRNA) and 30 different proteins. The 39S large subunit contains a 16S rRNA (16S mt-rRNA), a copy of mitochondrial valine transfer RNA (mt-tRNA(Val)), which plays an integral structural role, and 52 different proteins.

It localises to the mitochondrion. This Homo sapiens (Human) protein is Small ribosomal subunit protein mS23 (MRPS23).